The chain runs to 375 residues: Alanine racemase (375 aa).

The active-site Proton acceptor; specific for D-alanine is the lysine 35. At lysine 35 the chain carries N6-(pyridoxal phosphate)lysine. Residue arginine 133 participates in substrate binding. Tyrosine 261 serves as the catalytic Proton acceptor; specific for L-alanine. Methionine 309 is a binding site for substrate.

It belongs to the alanine racemase family. The cofactor is pyridoxal 5'-phosphate.

It catalyses the reaction L-alanine = D-alanine. Its pathway is amino-acid biosynthesis; D-alanine biosynthesis; D-alanine from L-alanine: step 1/1. Functionally, catalyzes the interconversion of L-alanine and D-alanine. May also act on other amino acids. In Syntrophobacter fumaroxidans (strain DSM 10017 / MPOB), this protein is Alanine racemase (alr).